The sequence spans 910 residues: Eukaryotic translation initiation factor 3 subunit C (910 aa).

The segment at 1 to 21 (MSRFFANGSDSESESSEDEIQ) is disordered. Residues 11-20 (SESESSEDEI) are compositionally biased toward acidic residues. Phosphoserine is present on residues Ser34, Ser165, Ser176, and Ser185. Residues 157–279 (FREAPDQESE…IRKRAEDDED (123 aa)) are disordered. Residues 162 to 186 (DQESEAEDEVVALESDGGDAGDDSD) are compositionally biased toward acidic residues. Residues 188-207 (GVKPTEAAPKAVKTAPAKAA) show a composition bias toward low complexity. Acidic residues predominate over residues 209 to 235 (ADDDDSDDSIDWDSDSESETESSDDEN). The segment covering 240–268 (MRERFLKRTTEKEEKDDDKRKDKRKEQKI) has biased composition (basic and acidic residues). Residues 639 to 815 (FHMHINLELL…ETVVMHRSEP (177 aa)) enclose the PCI domain. The disordered stretch occupies residues 847-910 (FFQRGNMGNR…QQQVQTIDEE (64 aa)). Positions 862–874 (NRNQNNQGGNWLG) are enriched in low complexity. Over residues 882 to 891 (RNRNQRGHHK) the composition is skewed to basic residues. Residues 895–910 (DRQQQQQQQVQTIDEE) show a composition bias toward low complexity.

This sequence belongs to the eIF-3 subunit C family. In terms of assembly, component of the eukaryotic translation initiation factor 3 (eIF-3) complex. The eIF-3 complex interacts with pix.

The protein localises to the cytoplasm. Functionally, component of the eukaryotic translation initiation factor 3 (eIF-3) complex, which is involved in protein synthesis of a specialized repertoire of mRNAs and, together with other initiation factors, stimulates binding of mRNA and methionyl-tRNAi to the 40S ribosome. The eIF-3 complex specifically targets and initiates translation of a subset of mRNAs involved in cell proliferation. The chain is Eukaryotic translation initiation factor 3 subunit C from Drosophila erecta (Fruit fly).